Consider the following 488-residue polypeptide: Glutamyl-tRNA(Gln) amidotransferase subunit A (488 aa).

Catalysis depends on charge relay system residues K77 and S152. S176 acts as the Acyl-ester intermediate in catalysis.

This sequence belongs to the amidase family. GatA subfamily. Heterotrimer of A, B and C subunits.

It catalyses the reaction L-glutamyl-tRNA(Gln) + L-glutamine + ATP + H2O = L-glutaminyl-tRNA(Gln) + L-glutamate + ADP + phosphate + H(+). Functionally, allows the formation of correctly charged Gln-tRNA(Gln) through the transamidation of misacylated Glu-tRNA(Gln) in organisms which lack glutaminyl-tRNA synthetase. The reaction takes place in the presence of glutamine and ATP through an activated gamma-phospho-Glu-tRNA(Gln). This is Glutamyl-tRNA(Gln) amidotransferase subunit A from Streptococcus pyogenes serotype M1.